An 862-amino-acid polypeptide reads, in one-letter code: Leucine--tRNA ligase (862 aa).

Residues 51–61 carry the 'HIGH' region motif; it reads PYPSGSLHMGH. The 'KMSKS' region motif lies at 624 to 628; sequence KMSKS. Lysine 627 serves as a coordination point for ATP.

The protein belongs to the class-I aminoacyl-tRNA synthetase family.

The protein localises to the cytoplasm. The enzyme catalyses tRNA(Leu) + L-leucine + ATP = L-leucyl-tRNA(Leu) + AMP + diphosphate. This is Leucine--tRNA ligase from Prochlorococcus marinus (strain NATL1A).